The following is a 194-amino-acid chain: MKRSNSIAVMLVLVLSSLMLLLPVEGQGHEGHGVGEILLMGKLGAPVCGVRASGRVCPDGYCCSQWGYCGTTEEYCGKGCQSQCDYNRCGKEFGGKECHDELCCSQYGWCGNSDGHCGEGCQSQCSYWRCGKDFGGRLCTEDMCCSQYGWCGLTDDHCEDGCQSQCDLPTLLPSPLRRIIAIRKLKANLANMLS.

The signal sequence occupies residues Met-1–Gly-26. Residues Gln-27–Gly-44 constitute a propeptide, removed in mature form. Chitin-binding type-1 domains follow at residues Ala-45–Tyr-86, Asn-87–Tyr-127, and Trp-128–Leu-168. 12 cysteine pairs are disulfide-bonded: Cys-48/Cys-63, Cys-57/Cys-69, Cys-62/Cys-76, Cys-80/Cys-84, Cys-89/Cys-104, Cys-98/Cys-110, Cys-103/Cys-117, Cys-121/Cys-125, Cys-130/Cys-145, Cys-139/Cys-151, Cys-144/Cys-158, and Cys-162/Cys-166. Residues Leu-171–Ser-194 constitute a propeptide, removed in mature form.

In terms of assembly, homodimer. The homodimers are asymmetric; formed in a 'head-to-tail' fashion via hydrophobic interactions between aromatic residues of the carbohydrate-binding sites of each subunit.

N-acetyl-D-glucosamine binding lectin. Almost no hemagglutinating activity towards human erythrocytes. Low mitogenic activity towards human peripheral blood lymphocytes. The sequence is that of Lectin-C from Phytolacca americana (American pokeweed).